The following is a 240-amino-acid chain: Phosphoribosyl isomerase A (240 aa).

Catalysis depends on Asp-11, which acts as the Proton acceptor. Catalysis depends on Asp-130, which acts as the Proton donor.

Belongs to the HisA/HisF family. Monomer.

It localises to the cytoplasm. It catalyses the reaction 1-(5-phospho-beta-D-ribosyl)-5-[(5-phospho-beta-D-ribosylamino)methylideneamino]imidazole-4-carboxamide = 5-[(5-phospho-1-deoxy-D-ribulos-1-ylimino)methylamino]-1-(5-phospho-beta-D-ribosyl)imidazole-4-carboxamide. The enzyme catalyses N-(5-phospho-beta-D-ribosyl)anthranilate = 1-(2-carboxyphenylamino)-1-deoxy-D-ribulose 5-phosphate. It functions in the pathway amino-acid biosynthesis; L-histidine biosynthesis; L-histidine from 5-phospho-alpha-D-ribose 1-diphosphate: step 4/9. The protein operates within amino-acid biosynthesis; L-tryptophan biosynthesis; L-tryptophan from chorismate: step 3/5. Functionally, catalyzes the isomerization of the aminoaldose moiety of ProFAR to the aminoketose of PRFAR in the biosynthesis pathway for histidine and the isomerization of the aminoaldose PRA to the aminoketose CdRP in the biosynthsis pathway for tryptophan. In Streptomyces coelicolor (strain ATCC BAA-471 / A3(2) / M145), this protein is Phosphoribosyl isomerase A (priA).